Reading from the N-terminus, the 979-residue chain is Oncostatin-M-specific receptor subunit beta (979 aa).

Positions 1–27 are cleaved as a signal peptide; sequence MALFAVFQTTFFLTLLSLRTYQSEVLA. Residues 28–740 are Extracellular-facing; sequence ERLPLTPVSL…VTTPDEHSSM (713 aa). Asn163 is a glycosylation site (N-linked (GlcNAc...) asparagine). Cys245 and Cys255 are joined by a disulfide. Asn326 and Asn380 each carry an N-linked (GlcNAc...) asparagine glycan. Fibronectin type-III domains follow at residues 335-428, 433-528, 529-623, and 625-736; these read NPFS…TLEA, APDV…DPEN, KEVE…SQEL, and PSDN…TPDE. The WSXWS motif motif lies at 415–419; it reads WSEWS. Residues Asn446 and Asn580 are each glycosylated (N-linked (GlcNAc...) asparagine). Residues 741–761 traverse the membrane as a helical segment; the sequence is LIHILLPMVFCVLLIMVMCYL. At 762-979 the chain is on the cytoplasmic side; sequence KSQWIKETCY…TLLDPGEHYC (218 aa). Positions 770–778 match the Box 1 motif motif; that stretch reads CYPDIPDPY. A phosphoserine mark is found at Ser826 and Ser889.

It belongs to the type I cytokine receptor family. Type 2 subfamily. Heterodimer composed of OSMR and IL6ST (type II OSM receptor). Heterodimer with IL31RA to form the IL31 receptor. In terms of tissue distribution, expressed in keratinocytes (at protein level). Expressed at relatively high levels in all neural cells as well as fibroblast and epithelial cells.

The protein resides in the membrane. In terms of biological role, associates with IL31RA to form the IL31 receptor. Binds IL31 to activate STAT3 and possibly STAT1 and STAT5. Capable of transducing OSM-specific signaling events. The polypeptide is Oncostatin-M-specific receptor subunit beta (OSMR) (Homo sapiens (Human)).